A 416-amino-acid chain; its full sequence is Phosphatidylinositol 5-phosphate 4-kinase type-2 beta (416 aa).

S2 bears the N-acetylserine mark. A Phosphothreonine modification is found at T8. S19 is subject to Phosphoserine. The PIPK domain maps to 38–415; that stretch reads ASEPILSVLM…RFNEFMSNIL (378 aa). Positions 64–70 are required for interaction with PIP5K1A; sequence VMLMPDD. N6-acetyllysine occurs at positions 94 and 150. ATP is bound by residues 202 to 204 and K214; that span reads RNV. GTP is bound by residues 203–204 and K214; that span reads NV. Phosphothreonine is present on T322. S326 is subject to Phosphoserine. A GTP-binding site is contributed by D369.

Homodimer. Binds TNFRSF1A. Interacts with PIP4K2A; the interaction suppresses ubiquitination by the SPOP/CUL3 complex. Probably interacts with PIP5K1A; the interaction inhibits PIP5K1A kinase activity. Post-translationally, ubiquitinated by the SPOP/CUL3 complex. Ubiquitination is stimulated by PtdIns5P levels. Phosphorylated on serine residues.

The protein resides in the endoplasmic reticulum membrane. The protein localises to the cell membrane. Its subcellular location is the nucleus. It localises to the cytoplasm. It carries out the reaction a 1,2-diacyl-sn-glycero-3-phospho-(1D-myo-inositol-5-phosphate) + ATP = a 1,2-diacyl-sn-glycero-3-phospho-(1D-myo-inositol-4,5-bisphosphate) + ADP + H(+). The enzyme catalyses 1,2-dihexadecanoyl-sn-glycero-3-phospho-(1D-myo-inositol-5-phosphate) + ATP = 1,2-dihexadecanoyl-sn-glycero-3-phospho-(1D-myo-inositol-4,5-bisphosphate) + ADP + H(+). The catalysed reaction is 1,2-dihexadecanoyl-sn-glycero-3-phospho-(1D-myo-inositol-5-phosphate) + GTP = 1,2-dihexadecanoyl-sn-glycero-3-phospho-(1D-myo-inositol-4,5-bisphosphate) + GDP + H(+). Participates in the biosynthesis of phosphatidylinositol 4,5-bisphosphate. Preferentially utilizes GTP, rather than ATP, for PI(5)P phosphorylation and its activity reflects changes in direct proportion to the physiological GTP concentration. Its GTP-sensing activity is critical for metabolic adaptation. In collaboration with PIP4K2A, has a role in mediating autophagy in times of nutrient stress. Required for autophagosome-lysosome fusion and the regulation of cellular lipid metabolism. PIP4Ks negatively regulate insulin signaling through a catalytic-independent mechanism. They interact with PIP5Ks and suppress PIP5K-mediated PtdIns(4,5)P2 synthesis and insulin-dependent conversion to PtdIns(3,4,5)P3. The polypeptide is Phosphatidylinositol 5-phosphate 4-kinase type-2 beta (Mus musculus (Mouse)).